The primary structure comprises 414 residues: Enterobactin exporter EntS (414 aa).

The Cytoplasmic segment spans residues 1-21 (MNRQSWLLNLSLLKTHPAFRA). A helical transmembrane segment spans residues 22–42 (VFLARFISIVSLGLLGVAVPV). The Periplasmic portion of the chain corresponds to 43 to 55 (QIQMMTHSTWQVG). The helical transmembrane segment at 56 to 76 (LSVTLTGGAMFIGLMVGGVLA) threads the bilayer. The Cytoplasmic portion of the chain corresponds to 77–83 (DRYERKK). Residues 84–104 (VILLARGTCGIGFIGLCVNAL) form a helical membrane-spanning segment. The Periplasmic portion of the chain corresponds to 105 to 109 (LPEPS). The chain crosses the membrane as a helical span at residues 110–130 (LLAIYLLGLWDGFFASLGVTA). Residues 131-156 (LLAATPALVGRENLMQAGAITMLTVR) are Cytoplasmic-facing. A helical membrane pass occupies residues 157–177 (LGSVISPMLGGILLASGGVAW). A topological domain (periplasmic) is located at residue N178. Residues 179–199 (YGLAAAGTFITLLPLLTLPRL) traverse the membrane as a helical segment. Over 200–218 (PVPPQPRENPFIALLAAFR) the chain is Cytoplasmic. The helical transmembrane segment at 219-239 (FLLASPLIGGIALLGGLVTMA) threads the bilayer. The Periplasmic portion of the chain corresponds to 240–256 (SAVRVLYPALAMSWQMS). A helical membrane pass occupies residues 257 to 277 (AAQIGLLYAAIPLGAAIGALT). The Cytoplasmic segment spans residues 278–287 (SGQLAHSVRP). Residues 288-307 (GLIMLVSTVGSFLAVGLFAI) traverse the membrane as a helical segment. At 308–313 (MPIWIA) the chain is on the periplasmic side. Residues 314–336 (GVICLALFGWLSAISSLLQYTLL) traverse the membrane as a helical segment. At 337–356 (QTQTPENMLGRMNGLWTAQN) the chain is on the cytoplasmic side. A helical transmembrane segment spans residues 357 to 377 (VTGDAIGAALLGGLGAMMTPV). Residue A378 is a topological domain, periplasmic. A helical membrane pass occupies residues 379 to 399 (SASVSGFGLVIIGLLLLLVLG). Topologically, residues 400–414 (ELRRFRQTPPVSDAG) are cytoplasmic.

This sequence belongs to the major facilitator superfamily. EntS (TC 2.A.1.38) family.

The protein localises to the cell inner membrane. Its function is as follows. Component of an export pathway for enterobactin. The polypeptide is Enterobactin exporter EntS (Salmonella typhi).